Reading from the N-terminus, the 364-residue chain is MRVLVSGGGTGGHIYPALALIREIKKLNPEARFLYIGTENGLESTIVPKAGIPFQSIVISGFKRKISLDNVKTVMRFLKGVQDSKRYIRRFNPDIVIGTGGYVCGPVVYAAAKLGIPTIVHEQNSVPGVTNKFLSRYVDKVAVCFEAAAEHFPQSKVVMTGNPRASEVMDQNGMKGKRSVGLSLPKKSVLIFGGSRGARPINDAFVEAIEQFGNKSYEILYVTGEVHYDKVMEAVKQKGNPNNVIIKPFIHNMPEVLTGVDLVVSRAGATTLAELTALGKPSVLIPSPYVTNNHQEKNARSVVDKGAAKMLLEKDLTAETLIRDIDEILLDAQTLQNMKLAAGQLGIPDAANKLYEVMNKLVKK.

UDP-N-acetyl-alpha-D-glucosamine-binding positions include 10–12, Asn-124, Ser-195, Ile-250, and Gln-295; that span reads TGG.

Belongs to the glycosyltransferase 28 family. MurG subfamily.

Its subcellular location is the cell membrane. It catalyses the reaction di-trans,octa-cis-undecaprenyl diphospho-N-acetyl-alpha-D-muramoyl-L-alanyl-D-glutamyl-meso-2,6-diaminopimeloyl-D-alanyl-D-alanine + UDP-N-acetyl-alpha-D-glucosamine = di-trans,octa-cis-undecaprenyl diphospho-[N-acetyl-alpha-D-glucosaminyl-(1-&gt;4)]-N-acetyl-alpha-D-muramoyl-L-alanyl-D-glutamyl-meso-2,6-diaminopimeloyl-D-alanyl-D-alanine + UDP + H(+). Its pathway is cell wall biogenesis; peptidoglycan biosynthesis. Its function is as follows. Cell wall formation. Catalyzes the transfer of a GlcNAc subunit on undecaprenyl-pyrophosphoryl-MurNAc-pentapeptide (lipid intermediate I) to form undecaprenyl-pyrophosphoryl-MurNAc-(pentapeptide)GlcNAc (lipid intermediate II). This is UDP-N-acetylglucosamine--N-acetylmuramyl-(pentapeptide) pyrophosphoryl-undecaprenol N-acetylglucosamine transferase 1 from Bacillus anthracis.